Here is a 258-residue protein sequence, read N- to C-terminus: Spindlin-2 (258 aa).

Positions 1–47 (MKTPHKKATARQQTREIVDDHTLSASMRKKKISQKKQRGRPSSQTRR) are disordered. Residues 13 to 22 (QTREIVDDHT) are compositionally biased toward basic and acidic residues. Positions 27–39 (MRKKKISQKKQRG) are enriched in basic residues. Tudor-like domain stretches follow at residues 50–99 (VGCR…LELH), 129–178 (IGKA…YQLL), and 210–255 (IGKH…YDLV). 2 histone H3K4me3 and H3R8me2a binding regions span residues glutamate 138 and 246–248 (DFH).

The protein belongs to the SPIN/STSY family. In terms of assembly, interacts with C11orf84/SPINDOC.

The protein localises to the nucleus. Functionally, may be involved in the regulation of cell cycle progression. Exhibits H3K4me3-binding activity. The sequence is that of Spindlin-2 (SPIN2) from Bos taurus (Bovine).